The sequence spans 409 residues: Effector protein BipC (409 aa).

Disordered stretches follow at residues 268-287 (RETG…RMSD) and 330-396 (SGGQ…VAND). The span at 360–369 (AQQTAMAAAS) shows a compositional bias: low complexity. Basic and acidic residues predominate over residues 370–382 (ARDEAAHRGRDAA).

The protein belongs to the SctB/SipC family.

The protein resides in the secreted. In Burkholderia thailandensis (strain ATCC 700388 / DSM 13276 / CCUG 48851 / CIP 106301 / E264), this protein is Effector protein BipC (bipC).